The primary structure comprises 263 residues: Phosphatidylglycerol--prolipoprotein diacylglyceryl transferase (263 aa).

4 helical membrane-spanning segments follow: residues 6–26 (VIFS…VLGI), 50–70 (LLTA…VLIY), 85–105 (TWEG…AVII), and 112–132 (IPTF…LFLG). R133 is a binding site for a 1,2-diacyl-sn-glycero-3-phospho-(1'-sn-glycerol). Helical transmembrane passes span 169–189 (LYEA…LFFL), 197–217 (GALT…VEFF), and 233–253 (MGQL…LGAL).

The protein belongs to the Lgt family.

The protein localises to the cell membrane. The catalysed reaction is L-cysteinyl-[prolipoprotein] + a 1,2-diacyl-sn-glycero-3-phospho-(1'-sn-glycerol) = an S-1,2-diacyl-sn-glyceryl-L-cysteinyl-[prolipoprotein] + sn-glycerol 1-phosphate + H(+). It functions in the pathway protein modification; lipoprotein biosynthesis (diacylglyceryl transfer). Its function is as follows. Catalyzes the transfer of the diacylglyceryl group from phosphatidylglycerol to the sulfhydryl group of the N-terminal cysteine of a prolipoprotein, the first step in the formation of mature lipoproteins. In Wolbachia pipientis wMel, this protein is Phosphatidylglycerol--prolipoprotein diacylglyceryl transferase.